We begin with the raw amino-acid sequence, 201 residues long: Indolepyruvate oxidoreductase subunit IorB (201 aa).

As to quaternary structure, heterodimer of the IorA and IorB subunits.

The enzyme catalyses indole-3-pyruvate + 2 oxidized [2Fe-2S]-[ferredoxin] + CoA = (indol-3-yl)acetyl-CoA + 2 reduced [2Fe-2S]-[ferredoxin] + CO2 + H(+). Its function is as follows. Catalyzes the ferredoxin-dependent oxidative decarboxylation of arylpyruvates. In Archaeoglobus fulgidus (strain ATCC 49558 / DSM 4304 / JCM 9628 / NBRC 100126 / VC-16), this protein is Indolepyruvate oxidoreductase subunit IorB (iorB).